The primary structure comprises 108 residues: Protein translation factor SUI1 (108 aa).

A disordered region spans residues 1–20 (MSIENLKSFDPFADTGDDEA).

It belongs to the SUI1 family.

Its function is as follows. Additional factor that functions in concert with eIF-2 and the initiator tRNA in directing the ribosome to the proper start site of translation. The sequence is that of Protein translation factor SUI1 (SUI1A) from Eremothecium gossypii (strain ATCC 10895 / CBS 109.51 / FGSC 9923 / NRRL Y-1056) (Yeast).